The following is a 301-amino-acid chain: MSRQAAPRWVVGEGRGTLGGAATMLRSLLLHSLRLCSQTASCLVLFPRFLGTAFMLWLLDFLCIRKHLLGRRRRGQPEIEVELNSDGEEVPPDDPPVCVSDDNRLCTLASLRAVWHGQKLDFFKQAHEGGPAPNSEVVLPDGFQNQHILDYARGNRPLVLNFGSCTUPPFMARMSAFQRLVTKYQRDVDFLIIYIEEAHPSDGWVTTDSPYSIPQHRSLEDRVSAARVLQQGAPECALVLDTMTNSSSSAYGAYFERLYIIQSGTIMYQGGRGPDGYQVSEVRTWLERYDEQLHGPQPRRV.

Topologically, residues 1 to 41 (MSRQAAPRWVVGEGRGTLGGAATMLRSLLLHSLRLCSQTAS) are cytoplasmic. The helical; Signal-anchor for type II membrane protein transmembrane segment at 42 to 64 (CLVLFPRFLGTAFMLWLLDFLCI) threads the bilayer. At 65–301 (RKHLLGRRRR…QLHGPQPRRV (237 aa)) the chain is on the extracellular side. The active site involves U167. Residue U167 is a non-standard amino acid, selenocysteine.

The protein belongs to the iodothyronine deiodinase family. In terms of assembly, monomer. Homodimer. May undergo minor heretodimerization with DIO1 and DIO2. As to expression, highly expressed in mammary gland. Detected at lower levels in kidney, and at very low levels in the other tissues.

The protein localises to the cell membrane. Its subcellular location is the endosome membrane. It carries out the reaction 3,3',5'-triiodo-L-thyronine + iodide + A + H(+) = L-thyroxine + AH2. The enzyme catalyses 3,3'-diiodo-L-thyronine + iodide + A + H(+) = 3,3',5-triiodo-L-thyronine + AH2. It catalyses the reaction 3-iodo-L-thyronine + iodide + A + H(+) = 3,5-diiodo-L-thyronine + AH2. The catalysed reaction is L-thyronine + iodide + A + H(+) = 3-iodo-L-thyronine + AH2. It carries out the reaction 3',5'-diiodo-L-thyronine + iodide + A + H(+) = 3,3',5'-triiodo-L-thyronine + AH2. The enzyme catalyses 3'-iodo-L-thyronine + iodide + A + H(+) = 3,3'-diiodo-L-thyronine + AH2. It catalyses the reaction 3,3',5'-triiodothyronamine + iodide + A + H(+) = 3,3',5,5'-tetraiodothyronamine + AH2. The catalysed reaction is 3',5'-diiodothyronamine + iodide + A + H(+) = 3,3',5'-triiodothyronamine + AH2. It carries out the reaction 3,3'-diiodothyronamine + iodide + A + H(+) = 3,3',5-triiodothyronamine + AH2. The enzyme catalyses 3-iodothyronamine + iodide + A + H(+) = 3,5-diiodothyronamine + AH2. It catalyses the reaction 3'-iodothyronamine + iodide + A + H(+) = 3,3'-diiodothyronamine + AH2. The catalysed reaction is thyronamine + iodide + A + H(+) = 3-iodothyronamine + AH2. In terms of biological role, plays a crucial role in the metabolism of thyroid hormones (TH) and has specific roles in TH activation and inactivation by deiodination. Catalyzes the deiodination of L-thyroxine (T4) to 3,3',5'-triiodothyronine (rT3), 3,5,3'-triiodothyronine (T3) to 3,3'-diiodothyronine (3,3'-T2), 3,5-diiodothyronine (3,5-T2) to 3-monoiodothyronine (3-T1), rT3 to 3',5'-diiodothyronine (3',5'-T2) and 3,3'-T2 to 3'-monoiodothyronine (3'-T1) via inner-ring deiodination (IRD). Catalyzes the deiodination of 3-T1 to L-thyronine (T0) via outer-ring deiodination (ORD). Catalyzes the tyrosyl ring deiodinations of 3,3',5,5'-tetraiodothyronamine, 3,3',5'-triiodothyronamine, 3,5,3'-triiodothyronamine, 3,5-diiodothyronamine, 3,3'-diiodothyronamine and 3-iodothyronamine. In Bos taurus (Bovine), this protein is Thyroxine 5-deiodinase (DIO3).